The primary structure comprises 265 residues: Hydroxyethylthiazole kinase (265 aa).

Methionine 43 contacts substrate. ATP contacts are provided by lysine 118 and threonine 165. Glycine 192 is a substrate binding site.

This sequence belongs to the Thz kinase family. The cofactor is Mg(2+).

The enzyme catalyses 5-(2-hydroxyethyl)-4-methylthiazole + ATP = 4-methyl-5-(2-phosphooxyethyl)-thiazole + ADP + H(+). The protein operates within cofactor biosynthesis; thiamine diphosphate biosynthesis; 4-methyl-5-(2-phosphoethyl)-thiazole from 5-(2-hydroxyethyl)-4-methylthiazole: step 1/1. Its function is as follows. Catalyzes the phosphorylation of the hydroxyl group of 4-methyl-5-beta-hydroxyethylthiazole (THZ). This chain is Hydroxyethylthiazole kinase, found in Pyrococcus furiosus (strain ATCC 43587 / DSM 3638 / JCM 8422 / Vc1).